Reading from the N-terminus, the 948-residue chain is MNSYAILLSLFFSFERLLTLANANSLYSPFNNSSFVDSDTSFSDLSRNGLLSLLDSNTTSASVQTIAISQTDNAASCIPSASLLSSSVVLYSAKETVTVSSYWSLVSTSVTGTVYVPYTSSVACFPYATSDAPNPIPRGDSATSTSIAPTYSASDSSATTITSSSPSTSIIGTGSTDTSVSSTLTYHTPIASPTTSSNSDNEYTVDVITSSSLSSFVITNVDSTTTSVINYIGASTLESSSLTNTVSPTESTFYETKSSTSSVPTQTIDSSSFTSSTPVSLTSSSTSSSGSSQDSTTIDSTPSTIATSTLQPTTSSPITTSAPSLSSALPTTYPSSLSTEVEVEYFTKTITDTSSIVTYSTGVETLYETETITSSEISSIIYNFSTPISGSSFPDGFKPINPTSFPSLTSSTKKIPSTTLPTSSKMITTTTPSVSNNTQSSFLIISTFTSSYEHSEPFKVSSVPLTSNNFSSISHSSASSLPITPSSYLSNTTLHSSVQSSQSSQFTVSVPSSTQSYSTSSNFTTPITISTSLSSFPTTIVSSSFQYSSLSSNVTTTNAQSSSLSSSNSSALTHISSSIVSSGSSSALSSSTIVSSINSSSSVFISSVSSSLQYSSSYVTETTTSGSVGFTTTIATPVGSTAGTVVVDIPTPSWVTETVTSGSVGFTTTIATPVGSTAGTVLVDIPTPSWVTETVTSGSVEFTTTIATPVGTTAGTVVVDIPTPSWVTETVTSGSVGFTTTIATPIGTTAGTVLVDIPTPSWVTETVTSGSVGFTTTIATPVGTTAGTVLIDVPTPTASSSPFPSCNTQCTNENSFRIQVINDDIYPSYVHLDSNNYAIAAARGDSDGENVFIYDSDIKRIVSCCGVKPIYRLDQDDTEGYSFEIYKDNDGQLQFKYPLNDALYPMELLTLTDGRIGITTNLTLYKPYYLNNVENERAANVVLRALEY.

A signal peptide spans 1 to 23; it reads MNSYAILLSLFFSFERLLTLANA. Residues asparagine 31, asparagine 32, and asparagine 57 are each glycosylated (N-linked (GlcNAc...) asparagine). Disordered regions lie at residues 136 to 174 and 253 to 333; these read IPRG…IGTG and FYET…PTTY. Low complexity predominate over residues 149–174; the sequence is PTYSASDSSATTITSSSPSTSIIGTG. Over residues 253 to 264 the composition is skewed to polar residues; that stretch reads FYETKSSTSSVP. The span at 265 to 332 shows a compositional bias: low complexity; that stretch reads TQTIDSSSFT…PSLSSALPTT (68 aa). Asparagine 383 carries an N-linked (GlcNAc...) asparagine glycan. The disordered stretch occupies residues 408–432; the sequence is LTSSTKKIPSTTLPTSSKMITTTTP. 7 N-linked (GlcNAc...) asparagine glycosylation sites follow: asparagine 436, asparagine 469, asparagine 491, asparagine 522, asparagine 553, asparagine 568, and asparagine 598. 5 consecutive repeat copies span residues 617–652, 653–688, 689–724, 725–760, and 761–796. The segment at 617–796 is 5 X 36 AA approximate tandem repeats; the sequence is SYVTETTTSG…GTVLIDVPTP (180 aa). The 153-residue stretch at 796–948 folds into the DIPSY domain; the sequence is PTASSSPFPS…ANVVLRALEY (153 aa). Asparagine 921 carries an N-linked (GlcNAc...) asparagine glycan.

Belongs to the mam3/map4 family.

The protein resides in the cell surface. P cell-type specific protein which involved in agglutination during conjugation. The polypeptide is P cell-type agglutination protein map4 (Schizosaccharomyces pombe (strain 972 / ATCC 24843) (Fission yeast)).